Consider the following 367-residue polypeptide: 2,6-dihydropseudooxynicotine hydrolase (367 aa).

Catalysis depends on residues Glu-148, Ser-217, Asp-300, and His-329.

The protein belongs to the AB hydrolase superfamily. In terms of assembly, homodimer.

It catalyses the reaction 2,6-dihydroxypseudooxynicotine + H2O = 2,6-dihydroxypyridine + 4-(methylamino)butanoate + H(+). The protein operates within alkaloid degradation; nicotine degradation; 2,6-dihydroxypyridine and 4-(methylamino)butanoate from 6-hydroxypseudooxynicotine: step 2/2. Its function is as follows. L-nicotine is used as a growth substrate. Plays a role in nicotine catabolism by cleaving a C-C bond in 2,6-dihydroxypseudooxynicotine. This chain is 2,6-dihydropseudooxynicotine hydrolase, found in Paenarthrobacter nicotinovorans (Arthrobacter nicotinovorans).